The sequence spans 446 residues: CBL-interacting serine/threonine-protein kinase 24 (446 aa).

A Protein kinase domain is found at 11-264 (YEVGRTIGEG…IQGIKKDPWF (254 aa)). ATP contacts are provided by residues 17 to 25 (IGEGTFAKV) and Lys-40. Residue Asp-134 is the Proton acceptor of the active site. An activation loop region spans residues 152 to 179 (DFGLSALPQEGVELLRTTCGTPNYVAPE). At Ser-156 the chain carries Phosphoserine. A Phosphothreonine modification is found at Thr-168. The NAF domain maps to 305–329 (EGPLMMNAFEMITLSQGLNLSALFD). The tract at residues 336–365 (KRQTRFVSRREPSEIIANIEAVANSMGFKS) is PPI.

The protein belongs to the protein kinase superfamily. CAMK Ser/Thr protein kinase family. SNF1 subfamily. As to quaternary structure, interacts with CBL1, CBL2, CBL4/SOS3, CBL5, CBL9, CBL10 and with the protein phosphatase 2C ABI2. Requires Mn(2+) as cofactor. Post-translationally, autophosphorylated.

The protein resides in the cytoplasm. It localises to the nucleus. It carries out the reaction L-seryl-[protein] + ATP = O-phospho-L-seryl-[protein] + ADP + H(+). The catalysed reaction is L-threonyl-[protein] + ATP = O-phospho-L-threonyl-[protein] + ADP + H(+). In terms of biological role, involved in the regulatory pathway for the control of intracellular Na(+) and K(+) homeostasis and salt tolerance. Activates the vacuolar H(+)/Ca(2+) antiporter CAX1 and operates in synergy with CBL4/SOS3 to activate the plasma membrane Na(+)/H(+) antiporter SOS1. CIPK serine-threonine protein kinases interact with CBL proteins. Binding of a CBL protein to the regulatory NAF domain of CIPK protein lead to the activation of the kinase in a calcium-dependent manner. Phosphorylates CBL1, CBL4 and CBL10. This chain is CBL-interacting serine/threonine-protein kinase 24 (CIPK24), found in Arabidopsis thaliana (Mouse-ear cress).